Here is a 156-residue protein sequence, read N- to C-terminus: ATP synthase subunit b (156 aa).

Residues Leu5–Val25 traverse the membrane as a helical segment.

The protein belongs to the ATPase B chain family. In terms of assembly, F-type ATPases have 2 components, F(1) - the catalytic core - and F(0) - the membrane proton channel. F(1) has five subunits: alpha(3), beta(3), gamma(1), delta(1), epsilon(1). F(0) has three main subunits: a(1), b(2) and c(10-14). The alpha and beta chains form an alternating ring which encloses part of the gamma chain. F(1) is attached to F(0) by a central stalk formed by the gamma and epsilon chains, while a peripheral stalk is formed by the delta and b chains.

Its subcellular location is the cell inner membrane. Its function is as follows. F(1)F(0) ATP synthase produces ATP from ADP in the presence of a proton or sodium gradient. F-type ATPases consist of two structural domains, F(1) containing the extramembraneous catalytic core and F(0) containing the membrane proton channel, linked together by a central stalk and a peripheral stalk. During catalysis, ATP synthesis in the catalytic domain of F(1) is coupled via a rotary mechanism of the central stalk subunits to proton translocation. In terms of biological role, component of the F(0) channel, it forms part of the peripheral stalk, linking F(1) to F(0). The polypeptide is ATP synthase subunit b (Legionella pneumophila (strain Paris)).